The chain runs to 336 residues: Dihydroorotate dehydrogenase (quinone) (336 aa).

FMN contacts are provided by residues 62-66 (AGLDK) and Thr-86. Lys-66 contacts substrate. 111–115 (NRMGF) serves as a coordination point for substrate. FMN-binding residues include Asn-139 and Asn-172. Position 172 (Asn-172) interacts with substrate. Ser-175 acts as the Nucleophile in catalysis. Asn-177 is a substrate binding site. Residues Lys-217 and Thr-245 each contribute to the FMN site. A substrate-binding site is contributed by 246-247 (NT). Residues Gly-268, Gly-297, and 318–319 (YS) contribute to the FMN site.

Belongs to the dihydroorotate dehydrogenase family. Type 2 subfamily. Monomer. It depends on FMN as a cofactor.

It localises to the cell membrane. The enzyme catalyses (S)-dihydroorotate + a quinone = orotate + a quinol. It functions in the pathway pyrimidine metabolism; UMP biosynthesis via de novo pathway; orotate from (S)-dihydroorotate (quinone route): step 1/1. Functionally, catalyzes the conversion of dihydroorotate to orotate with quinone as electron acceptor. The sequence is that of Dihydroorotate dehydrogenase (quinone) from Aeromonas salmonicida (strain A449).